A 354-amino-acid chain; its full sequence is MAELKNDRYLRALLKQPVDVTPVWMMRQAGRYLPEYKATRAQAGDFMSLCRNAELACEVTLQPLRRYDLDAAILFSDILTVPDAMGLGLYFETGEGPRFERPTDTLDAIKKLAVPDPEDELGYVMKAVSTIRRELKGEVPLIGFSGSPWTLATYMVEGGSSKTFEKIKKMAYAEPAALHMLLDKLADAVTLYLNAQVANGAQSLMIFDSWGGALSHTAYREFSLRYMQKIVDGLTRHADGRQVPVTLFTKGGGLWLEAMAETGCDALGLDWTVDIADARRRVGHKVALQGNMDPSMLYASPERIHEEVRQILAGYGEGSGHVFNLGHGIHQHVDPEHAGAFIKSVHELSAQYHK.

Substrate contacts are provided by residues 27–31 (RQAGR), D77, Y154, S209, and H327.

It belongs to the uroporphyrinogen decarboxylase family. As to quaternary structure, homodimer.

The protein localises to the cytoplasm. It carries out the reaction uroporphyrinogen III + 4 H(+) = coproporphyrinogen III + 4 CO2. The protein operates within porphyrin-containing compound metabolism; protoporphyrin-IX biosynthesis; coproporphyrinogen-III from 5-aminolevulinate: step 4/4. Catalyzes the decarboxylation of four acetate groups of uroporphyrinogen-III to yield coproporphyrinogen-III. This Shewanella loihica (strain ATCC BAA-1088 / PV-4) protein is Uroporphyrinogen decarboxylase.